Here is a 199-residue protein sequence, read N- to C-terminus: VAMP-like protein YKT62 (199 aa).

Residues 7 to 131 form the Longin domain; that stretch reads LVLKCDPETR…PYLKEASDKF (125 aa). Residues 139 to 199 form the v-SNARE coiled-coil homology domain; it reads KLLKIQRELD…KKTNSCCTLL (61 aa). Cys-195 carries S-palmitoyl cysteine lipidation. A Cysteine methyl ester modification is found at Cys-196. A lipid anchor (S-geranylgeranyl cysteine) is attached at Cys-196. Positions 197-199 are cleaved as a propeptide — removed in mature form; that stretch reads TLL.

Belongs to the synaptobrevin family. In terms of assembly, interacts with SYP41. Core constituent of the SNARE complex required for membrane fusion at the trans-Golgi network.

The protein resides in the cell membrane. Involved in the secretory pathway. Essential for membrane fusion mediated by either SYP41 or SYP61; triggers the fusion of phospholipid vesicles containing SYP41 or SYP61 and VTI12. This is VAMP-like protein YKT62 from Arabidopsis thaliana (Mouse-ear cress).